Here is a 181-residue protein sequence, read N- to C-terminus: SecB-like chaperone MT2006 (181 aa).

Belongs to the SecB-like family. As to quaternary structure, homotetramer, interacts with antitoxin HigA1.

Functionally, chaperone component of an atypical, type II toxin-antitoxin chaperone (TAC) module, probably required for antitoxin HigA1 to neutralize its cognate toxin HigB1. This is SecB-like chaperone MT2006 (secBL) from Mycobacterium tuberculosis (strain CDC 1551 / Oshkosh).